The following is a 415-amino-acid chain: Multidrug resistance protein MdtA (415 aa).

An N-terminal signal peptide occupies residues 1–21; sequence MKGSYKSRWVIVIVVVIAAIA. A compositionally biased stretch (polar residues) spans 31–46; it reads DSQSAAPGATKQAQQS. Disordered stretches follow at residues 31–56 and 391–415; these read DSQS…GMRA and VEAQ…GARS. The span at 399–415 shows a compositional bias: basic and acidic residues; the sequence is PEEKATSREYAKKGARS.

It belongs to the membrane fusion protein (MFP) (TC 8.A.1) family. As to quaternary structure, part of a tripartite efflux system composed of MdtA, MdtB and MdtC.

It is found in the cell inner membrane. Its function is as follows. The MdtABC tripartite complex confers resistance against novobiocin and deoxycholate. The protein is Multidrug resistance protein MdtA of Escherichia coli O45:K1 (strain S88 / ExPEC).